Consider the following 133-residue polypeptide: ATP synthase epsilon chain (133 aa).

Belongs to the ATPase epsilon chain family. As to quaternary structure, F-type ATPases have 2 components, CF(1) - the catalytic core - and CF(0) - the membrane proton channel. CF(1) has five subunits: alpha(3), beta(3), gamma(1), delta(1), epsilon(1). CF(0) has three main subunits: a, b and c.

It localises to the cell membrane. Functionally, produces ATP from ADP in the presence of a proton gradient across the membrane. In Mycoplasma genitalium (strain ATCC 33530 / DSM 19775 / NCTC 10195 / G37) (Mycoplasmoides genitalium), this protein is ATP synthase epsilon chain (atpC).